The sequence spans 257 residues: Adenylate kinase (257 aa).

52–57 (GAGKGT) lines the ATP pocket. An NMP region spans residues 72–101 (ATGDMLRSQVAKKTELGKEAKKIMDQGGLV). AMP is bound by residues Thr73, Arg78, 99–101 (GLV), 128–131 (GFPR), and Gln135. An LID region spans residues 169 to 206 (GRLVHPASGRSYHKIFNPPKNDMKDDVTGEPLIQRSDD). ATP-binding positions include Arg170 and 179–180 (SY). AMP contacts are provided by Arg203 and Arg214. Residue Gln242 coordinates ATP.

The protein belongs to the adenylate kinase family. AK2 subfamily. As to quaternary structure, monomer.

It localises to the cytoplasm. It is found in the cytosol. The protein localises to the mitochondrion intermembrane space. The catalysed reaction is AMP + ATP = 2 ADP. Its function is as follows. Catalyzes the reversible transfer of the terminal phosphate group between ATP and AMP. Plays an important role in cellular energy homeostasis and in adenine nucleotide metabolism. Adenylate kinase activity is critical for regulation of the phosphate utilization and the AMP de novo biosynthesis pathways. The chain is Adenylate kinase (adk1) from Aspergillus fumigatus (strain CBS 144.89 / FGSC A1163 / CEA10) (Neosartorya fumigata).